We begin with the raw amino-acid sequence, 218 residues long: Large ribosomal subunit protein uL3 (218 aa).

The disordered stretch occupies residues 121 to 163 (GYQKRHGFSRGPMTHGSKNHREPGSIGPGTTPGRIYPGKRMAG).

The protein belongs to the universal ribosomal protein uL3 family. As to quaternary structure, part of the 50S ribosomal subunit. Forms a cluster with proteins L14 and L19.

In terms of biological role, one of the primary rRNA binding proteins, it binds directly near the 3'-end of the 23S rRNA, where it nucleates assembly of the 50S subunit. The protein is Large ribosomal subunit protein uL3 of Parasynechococcus marenigrum (strain WH8102).